Reading from the N-terminus, the 565-residue chain is Mitochondrial distribution and morphology protein 34 (565 aa).

The SMP-LTD domain occupies 1–195 (MAFNFNWSPL…LPAIIHRLSL (195 aa)). 3 disordered regions span residues 207 to 236 (EDQD…VDAL), 296 to 317 (PSDQ…LSRT), and 348 to 504 (STYG…RQLP). Positions 358 to 370 (RHSKAHARKRKKR) are enriched in basic residues. Residues 371-381 (VVDLRRPKQPE) are compositionally biased toward basic and acidic residues. The segment covering 382–401 (SETASVTDESSFTETTSAPS) has biased composition (polar residues). Composition is skewed to basic and acidic residues over residues 446–472 (LRRD…HAEV) and 483–496 (IRHE…EKQE).

It belongs to the MDM34 family. Component of the ER-mitochondria encounter structure (ERMES) or MDM complex, composed of mmm1, mdm10, mdm12 and mdm34.

The protein localises to the mitochondrion outer membrane. In terms of biological role, component of the ERMES/MDM complex, which serves as a molecular tether to connect the endoplasmic reticulum (ER) and mitochondria. Components of this complex are involved in the control of mitochondrial shape and protein biogenesis, and function in nonvesicular lipid trafficking between the ER and mitochondria. Mdm34 is required for the interaction of the ER-resident membrane protein mmm1 and the outer mitochondrial membrane-resident beta-barrel protein mdm10. The sequence is that of Mitochondrial distribution and morphology protein 34 from Aspergillus terreus (strain NIH 2624 / FGSC A1156).